The sequence spans 380 residues: Guanine nucleotide-binding protein subunit beta (380 aa).

WD repeat units follow at residues 64–94 (GHSGKVYSLDWTPEKNWIVSASQDGRLIVWN), 106–136 (LHCPWVMTCAFAPNGQSVACGGLDSACSIFN), 155–186 (GHKGYVSSCQYVPDQETRLITSSGDQTCVLWD), 203–234 (GHTADVLSLSINSSNSNMFVSGSCDATVRLWD), 247–277 (GHEGDINSVKFFPDGQRFGTGSDDGTCRLFD), 296–326 (NELPTVTSIAFSISGRLLFAGYSNGDCYVWD), and 342–372 (SHEGRISCLGLSSDGSALCTGSWDKNLKIWA).

The protein belongs to the WD repeat G protein beta family. G proteins are composed of 3 units, alpha, beta and gamma. Interacts with the gamma subunits RGG1 and RGG2.

The protein localises to the cell membrane. Functionally, guanine nucleotide-binding proteins (G proteins) are involved as modulators or transducers in various transmembrane signaling systems. The beta and gamma chains are required for the GTPase activity, for replacement of GDP by GTP, and for G protein-effector interaction. The protein is Guanine nucleotide-binding protein subunit beta of Oryza sativa subsp. japonica (Rice).